Here is a 113-residue protein sequence, read N- to C-terminus: Protein ORF3 (113 aa).

Hydrophobic stretches follow at residues 1 to 21 and 32 to 52; these read MGSPCALGLFCCCSSCFCLCC and AVVGGAAAVPAVVSGVTGLIL. The interaction with host HPX stretch occupies residues 27–67; sequence ASRLAAVVGGAAAVPAVVSGVTGLILSPSPSPIFIQPTPSP. Residues 47-71 are interaction with the capsid protein; that stretch reads VTGLILSPSPSPIFIQPTPSPPMSF. S70 carries the phosphoserine; by host modification. The segment at 71 to 113 is homodimerization, and interaction with host AMBP/bikunin; that stretch reads FHNPGLELALDSRPAPLXPLGVTSPSAPPLPPVVDLPQLGLRR. The interval 90–113 is disordered; that stretch reads LGVTSPSAPPLPPVVDLPQLGLRR. Positions 94 to 103 are interaction with host SRC, HCK, FYN, PIK3R3 and GRB2; it reads SPSAPPLPPV. The short motif at 95-98 is the PTAP/PSAP motif element; the sequence is PSAP.

Belongs to the hepevirus ORF3 protein family. As to quaternary structure, forms homooligomers. Interacts with host SRC, HCK, FYN, PIK3R3 and GRB2 (via SH3 domain); binding does not activate the kinases. Interacts with host AMBP/bikunin and AMBP/alpha-1-microglobulin peptides. Interacts with host HPX/hemopexin. Interacts (when phosphorylated) with capsid protein ORF2. Interacts with host TSG101; this interaction plays a role in viral release from the host cell. Interacts with host SIRPA; this interaction down-regulates the phosphorylation of host IRF3. Palmitoylated in the N-terminus.

It localises to the host endoplasmic reticulum membrane. Its subcellular location is the host cytoplasm. It is found in the host cytoskeleton. The protein localises to the virion. The protein resides in the host cell membrane. In terms of biological role, small multifunctional phosphoprotein involved in virion morphogenesis, egress and counteracting host innate immunity. Plays critical roles in the final steps of viral release by interacting with host TSG101, a member of the vacuolar protein-sorting pathway and using other cellular host proteins involved in vesicle formation pathway. Also acts as a viroporin and forms ion conductive pores allowing viral particle release. Impairs the generation of type I interferon by down-regulating host TLR3 and TLR7 as well as their downstream signaling pathways. Down-regulates the phosphorylation of host IRF3 via the interaction with host SIRP-alpha, thereby inhibiting IFN-I expression. Interacts with host microtubules. In Hepatitis E virus genotype 3 (isolate Human/United States/US2) (HEV-3), this protein is Protein ORF3.